The sequence spans 532 residues: Germ cell nuclear acidic-1 protein (532 aa).

Residues 1 to 10 (MPTPFRDLHN) are compositionally biased toward basic and acidic residues. 3 disordered regions span residues 1-50 (MPTP…EPIS), 84-181 (REAP…GNFE), and 213-253 (YISE…DRKQ). Positions 14–32 (ASASSYETAWSSSFSSRRS) are enriched in low complexity. Basic and acidic residues-rich tracts occupy residues 39 to 48 (SNLKEIKDEP), 94 to 107 (LLQK…RDML), and 124 to 133 (KPKEVKKALK). The segment covering 213–235 (YISEESSEEESEEEEEDVDDEEY) has biased composition (acidic residues). Positions 236–251 (RESSPEVEAKISYSDR) are enriched in basic and acidic residues. The SprT-like domain occupies 308–398 (RRIFSAIPSE…GARCSSVFKS (91 aa)). Residues 468–489 (AKPVGPILSNSSKPSPPAPRRI) form a disordered region.

The protein belongs to the serine-aspartate repeat-containing protein (SDr) family. As to quaternary structure, interacts with top-2; this interaction allows the resolution of topoisomerase II (top-2) DNA-protein cross-links. Mainly expressed in germ cells and early embryonic, proliferating cells.

Its subcellular location is the chromosome. Its function is as follows. May play a role in DNA-protein cross-links (DPCs) clearance through a SUMO-dependent recruitment to sites of DPCs, ensuring the genomic stability by protecting germ cells and early embryos from various sources of damage. May resolve the topoisomerase II (top-2) DPCs. Limits replication stress and DNA double-strand breaks. In Caenorhabditis elegans, this protein is Germ cell nuclear acidic-1 protein.